Here is a 279-residue protein sequence, read N- to C-terminus: B3 domain-containing protein Os05g0481400 (279 aa).

A disordered region spans residues 45 to 68; it reads ARLQKSTRASPKPRKKFEVGATEV. A DNA-binding region (TF-B3) is located at residues 139–230; the sequence is FVKTMVRSHV…RFKIYIIKAV (92 aa). 2 stretches are compositionally biased toward acidic residues: residues 233-244 and 252-262; these read DANESEPADEEA and TEDAAEQDDSP. Residues 233–279 are disordered; it reads DANESEPADEEAIGDKDTSTEDAAEQDDSPNAEPLKGTKRRKLRGRR. Residues 269–279 are compositionally biased toward basic residues; sequence GTKRRKLRGRR.

It is found in the nucleus. The polypeptide is B3 domain-containing protein Os05g0481400 (Oryza sativa subsp. japonica (Rice)).